Consider the following 73-residue polypeptide: Conotoxin Leo-O2 (73 aa).

The N-terminal stretch at 1–22 (MKLTCVLIIAVLFLTACQLVTA) is a signal peptide. Residues 23–47 (DYSGDEQQYRAMRLIDAMRNFGDTR) constitute a propeptide that is removed on maturation. 3 disulfides stabilise this stretch: cysteine 49/cysteine 59, cysteine 56/cysteine 64, and cysteine 58/cysteine 69.

It belongs to the conotoxin O1 superfamily. As to expression, expressed by the venom duct.

It is found in the secreted. This Conus leopardus (Leopard cone) protein is Conotoxin Leo-O2.